The primary structure comprises 105 residues: Protein ORFg in retron Ec67 (105 aa).

This is Protein ORFg in retron Ec67 from Escherichia coli.